Reading from the N-terminus, the 341-residue chain is UDP-3-O-acylglucosamine N-acyltransferase (341 aa).

Histidine 242 acts as the Proton acceptor in catalysis.

Belongs to the transferase hexapeptide repeat family. LpxD subfamily. Homotrimer.

It carries out the reaction a UDP-3-O-[(3R)-3-hydroxyacyl]-alpha-D-glucosamine + a (3R)-hydroxyacyl-[ACP] = a UDP-2-N,3-O-bis[(3R)-3-hydroxyacyl]-alpha-D-glucosamine + holo-[ACP] + H(+). It functions in the pathway bacterial outer membrane biogenesis; LPS lipid A biosynthesis. In terms of biological role, catalyzes the N-acylation of UDP-3-O-acylglucosamine using 3-hydroxyacyl-ACP as the acyl donor. Is involved in the biosynthesis of lipid A, a phosphorylated glycolipid that anchors the lipopolysaccharide to the outer membrane of the cell. The chain is UDP-3-O-acylglucosamine N-acyltransferase from Haemophilus influenzae (strain ATCC 51907 / DSM 11121 / KW20 / Rd).